A 170-amino-acid polypeptide reads, in one-letter code: Adenine phosphoribosyltransferase (170 aa).

Belongs to the purine/pyrimidine phosphoribosyltransferase family. Homodimer.

The protein resides in the cytoplasm. It catalyses the reaction AMP + diphosphate = 5-phospho-alpha-D-ribose 1-diphosphate + adenine. The protein operates within purine metabolism; AMP biosynthesis via salvage pathway; AMP from adenine: step 1/1. In terms of biological role, catalyzes a salvage reaction resulting in the formation of AMP, that is energically less costly than de novo synthesis. The polypeptide is Adenine phosphoribosyltransferase (Symbiobacterium thermophilum (strain DSM 24528 / JCM 14929 / IAM 14863 / T)).